The chain runs to 1432 residues: Probable ATP-dependent RNA helicase spindle-E (1432 aa).

One can recognise a Helicase ATP-binding domain in the interval 125–292; that stretch reads MKAIRENTVV…FATKNGIPPV (168 aa). 138–145 contributes to the ATP binding site; it reads GETGCGKT. The short motif at 238-241 is the DEAH box element; sequence DEVH. The region spanning 342 to 525 is the Helicase C-terminal domain; the sequence is VIDNMERRTE…SSVLKAKELN (184 aa). One can recognise a Tudor domain in the interval 936–999; sequence AGSITKNLKL…RFMSNQLKRE (64 aa).

It belongs to the DEAD box helicase family. DEAH subfamily.

The protein resides in the cytoplasm. It carries out the reaction ATP + H2O = ADP + phosphate + H(+). Probable ATP-binding RNA helicase which plays a central role during spermatogenesis and oogenesis by repressing transposable elements and preventing their mobilization, which is essential for the germline integrity. Acts via the piRNA metabolic process, which mediates the repression of transposable elements during meiosis by forming complexes composed of piRNAs and Piwi and govern the methylation and subsequent repression of transposons. Involved in the repression of LTR retrotransposon copia. Also involved in telomere regulation by repressing specialized telomeric retroelements HeT-A, TAHRE, and TART; Drosophila telomeres being maintained by transposition of specialized telomeric retroelements. Involved in telomeric trans-silencing, a repression mechanism by which a transposon or a transgene inserted in subtelomeric heterochromatin has the capacity to repress in trans in the female germline, a homologous transposon, or transgene located in euchromatin. Involved in the repression of testis-expressed Stellate genes by the homologous Su(Ste) repeats. Required for anteroposterior and dorsoventral axis formation during oogenesis. This Drosophila willistoni (Fruit fly) protein is Probable ATP-dependent RNA helicase spindle-E (spn-E).